Reading from the N-terminus, the 393-residue chain is Short chain dehydrogenase sirQ (393 aa).

Position 54 (L54) interacts with NADP(+). Catalysis depends on S233, which acts as the Proton donor. The active-site Lowers pKa of active site Tyr is K259. A286 is an NADP(+) binding site.

This sequence belongs to the short-chain dehydrogenases/reductases (SDR) family. Highly divergent.

Its pathway is mycotoxin biosynthesis. In terms of biological role, short chain dehydrogenase; part of the gene cluster that mediates the biosynthesis of sirodesmin PL, an epipolythiodioxopiperazine (ETP) characterized by a disulfide bridged cyclic dipeptide and that acts as a phytotoxin which is involved in the blackleg didease of canola. SirD catalyzes the O-prenylation of L-tyrosine (L-Tyr) in the presence of dimethylallyl diphosphate (DMAPP) to yield 4-O-dimethylallyl-L-Tyr, and therefore represents probably the first pathway-specific enzyme in the biosynthesis of sirodesmin PL. 4-O-dimethylallyl-L-Tyr, then undergoes condensation with L-Ser in a reaction catalyzed by the non-ribosomal peptide synthase sirP to form the diketopiperazine (DKP) backbone. Further bishydroxylation of the DKP performed by the cytochrome P450 monooxygenase sirC leads to the production of the intermediate phomamide. This step is essential to form the reactive thiol group required for toxicity of sirodesmin PL. The next steps of sirodesmin biosynthesis are not well understood yet, but some predictions could be made from intermediate compounds identification. Phomamide is converted into phomalizarine via oxidation, probably by sirT. Further oxidation, methylation (by sirM or sirN) and reduction steps convert phomalizarine to deacetyl sirodesmin. Finally, acetyltransferase sirH probably acetylates deacetyl sirodesmin to produce sirodesmin PL. In Leptosphaeria maculans (Blackleg fungus), this protein is Short chain dehydrogenase sirQ.